The primary structure comprises 266 residues: 5'-nucleotidase SurE (266 aa).

Asp8, Asp9, Ser39, and Asn93 together coordinate a divalent metal cation.

This sequence belongs to the SurE nucleotidase family. A divalent metal cation serves as cofactor.

It is found in the cytoplasm. The enzyme catalyses a ribonucleoside 5'-phosphate + H2O = a ribonucleoside + phosphate. Functionally, nucleotidase that shows phosphatase activity on nucleoside 5'-monophosphates. The sequence is that of 5'-nucleotidase SurE from Thermococcus gammatolerans (strain DSM 15229 / JCM 11827 / EJ3).